The following is a 300-amino-acid chain: Endonuclease III-like protein 1 (300 aa).

Residues 1 to 19 (MNSGVRMVTRSRSRATRIA) constitute a mitochondrion transit peptide. A disordered region spans residues 1–53 (MNSGVRMVTRSRSRATRIASEGCREELAPREAAAEGRKSHRPVRHPRRTQKTH). A compositionally biased stretch (basic and acidic residues) spans 22-37 (GCREELAPREAAAEGR). Residues 38–51 (KSHRPVRHPRRTQK) are compositionally biased toward basic residues. Positions 187–211 (RYEGDIPASVAELVALPGVGPKMAH) constitute a HhH domain. K208 (nucleophile; for N-glycosylase activity) is an active-site residue. Residues C278, C285, C288, and C294 each coordinate [4Fe-4S] cluster.

It belongs to the Nth/MutY family. As to quaternary structure, interacts with YBX1. Interacts with ERCC5/XPG; the interaction stimulates NTHL1 activity and NTHL1 binding to its DNA substrate. It depends on [4Fe-4S] cluster as a cofactor. Ubiquitinated by TRIM26; leading to proteasomal degradation. In terms of tissue distribution, widely expressed.

It is found in the nucleus. The protein localises to the mitochondrion. It carries out the reaction 2'-deoxyribonucleotide-(2'-deoxyribose 5'-phosphate)-2'-deoxyribonucleotide-DNA = a 3'-end 2'-deoxyribonucleotide-(2,3-dehydro-2,3-deoxyribose 5'-phosphate)-DNA + a 5'-end 5'-phospho-2'-deoxyribonucleoside-DNA + H(+). In terms of biological role, bifunctional DNA N-glycosylase with associated apurinic/apyrimidinic (AP) lyase function that catalyzes the first step in base excision repair (BER), the primary repair pathway for the repair of oxidative DNA damage. The DNA N-glycosylase activity releases the damaged DNA base from DNA by cleaving the N-glycosidic bond, leaving an AP site. The AP lyase activity cleaves the phosphodiester bond 3' to the AP site by a beta-elimination. Primarily recognizes and repairs oxidative base damage of pyrimidines. The polypeptide is Endonuclease III-like protein 1 (Nthl1) (Mus musculus (Mouse)).